The following is a 1213-amino-acid chain: DNA-directed RNA polymerase subunit beta (1213 aa).

Positions 1153 to 1213 (RDMDEDSSEH…ADESDGKVSK (61 aa)) are disordered. Residues 1171 to 1198 (MAEEQEKKKLAEETGKSENKEDSNETAD) show a composition bias toward basic and acidic residues.

The protein belongs to the RNA polymerase beta chain family. The RNAP catalytic core consists of 2 alpha, 1 beta, 1 beta' and 1 omega subunit. When a sigma factor is associated with the core the holoenzyme is formed, which can initiate transcription.

The enzyme catalyses RNA(n) + a ribonucleoside 5'-triphosphate = RNA(n+1) + diphosphate. DNA-dependent RNA polymerase catalyzes the transcription of DNA into RNA using the four ribonucleoside triphosphates as substrates. This chain is DNA-directed RNA polymerase subunit beta, found in Lactobacillus acidophilus (strain ATCC 700396 / NCK56 / N2 / NCFM).